A 150-amino-acid chain; its full sequence is Galectin-1 (150 aa).

Residues 9 to 141 (NQIKLQDDFK…FSSPVTVDIH (133 aa)) form the Galectin domain. H51, R55, N64, and E75 together coordinate a carbohydrate.

As to quaternary structure, homotetramer. Oligomerization is required for carbohydrate binding. Most abundant in fruiting bodies. Very low levels of expression in asexual vegetative mycelia.

It localises to the secreted. Its subcellular location is the extracellular space. The protein localises to the extracellular matrix. The protein resides in the cell wall. It is found in the endomembrane system. Functionally, binds lactose. May play a role in fruiting body formation. The chain is Galectin-1 (Cgl1) from Coprinopsis cinerea (strain Okayama-7 / 130 / ATCC MYA-4618 / FGSC 9003) (Inky cap fungus).